The primary structure comprises 274 residues: Protein CURLY FLAG LEAF 1 (274 aa).

The disordered stretch occupies residues 17-44 (SLNGGGGGGGGRRRGRRAAAAEGSDDSE). The EAR motif lies at 47 to 52 (TVELNS). Positions 54–88 (VALPYHWEQCLDIRTGQVYYINWEDGTRTTIDPRS) constitute a WW domain. Disordered stretches follow at residues 83 to 133 (TIDP…SGYT) and 175 to 216 (GRDG…SPTD). Composition is skewed to low complexity over residues 87-106 (RSSSAYSPSPASRSASSSSR), 121-133 (AAAASTTTSSGYT), and 184-207 (SSSSSSSSSSSSSASSSRGSAVSS).

As to quaternary structure, binds to HDG1.

Negatively regulates the cuticle development probably by interacting with the HD-ZIP IV transcription factor HDG1. The protein is Protein CURLY FLAG LEAF 1 of Oryza sativa subsp. japonica (Rice).